The primary structure comprises 214 residues: Thiamine-phosphate synthase (214 aa).

4-amino-2-methyl-5-(diphosphooxymethyl)pyrimidine-binding positions include 40–44 (QLREK) and Asn-72. Mg(2+) contacts are provided by Asp-73 and Asp-92. Ser-110 provides a ligand contact to 4-amino-2-methyl-5-(diphosphooxymethyl)pyrimidine. 137-139 (SPT) is a 2-[(2R,5Z)-2-carboxy-4-methylthiazol-5(2H)-ylidene]ethyl phosphate binding site. Lys-140 contacts 4-amino-2-methyl-5-(diphosphooxymethyl)pyrimidine. 2-[(2R,5Z)-2-carboxy-4-methylthiazol-5(2H)-ylidene]ethyl phosphate-binding positions include Gly-167 and 185 to 186 (IS).

The protein belongs to the thiamine-phosphate synthase family. Requires Mg(2+) as cofactor.

It catalyses the reaction 2-[(2R,5Z)-2-carboxy-4-methylthiazol-5(2H)-ylidene]ethyl phosphate + 4-amino-2-methyl-5-(diphosphooxymethyl)pyrimidine + 2 H(+) = thiamine phosphate + CO2 + diphosphate. It carries out the reaction 2-(2-carboxy-4-methylthiazol-5-yl)ethyl phosphate + 4-amino-2-methyl-5-(diphosphooxymethyl)pyrimidine + 2 H(+) = thiamine phosphate + CO2 + diphosphate. The enzyme catalyses 4-methyl-5-(2-phosphooxyethyl)-thiazole + 4-amino-2-methyl-5-(diphosphooxymethyl)pyrimidine + H(+) = thiamine phosphate + diphosphate. Its pathway is cofactor biosynthesis; thiamine diphosphate biosynthesis; thiamine phosphate from 4-amino-2-methyl-5-diphosphomethylpyrimidine and 4-methyl-5-(2-phosphoethyl)-thiazole: step 1/1. In terms of biological role, condenses 4-methyl-5-(beta-hydroxyethyl)thiazole monophosphate (THZ-P) and 2-methyl-4-amino-5-hydroxymethyl pyrimidine pyrophosphate (HMP-PP) to form thiamine monophosphate (TMP). The polypeptide is Thiamine-phosphate synthase (Wolinella succinogenes (strain ATCC 29543 / DSM 1740 / CCUG 13145 / JCM 31913 / LMG 7466 / NCTC 11488 / FDC 602W) (Vibrio succinogenes)).